A 371-amino-acid polypeptide reads, in one-letter code: Histidinol-phosphate aminotransferase (371 aa).

K227 is modified (N6-(pyridoxal phosphate)lysine).

Belongs to the class-II pyridoxal-phosphate-dependent aminotransferase family. Histidinol-phosphate aminotransferase subfamily. As to quaternary structure, homodimer. Pyridoxal 5'-phosphate is required as a cofactor.

The enzyme catalyses L-histidinol phosphate + 2-oxoglutarate = 3-(imidazol-4-yl)-2-oxopropyl phosphate + L-glutamate. Its pathway is amino-acid biosynthesis; L-histidine biosynthesis; L-histidine from 5-phospho-alpha-D-ribose 1-diphosphate: step 7/9. In Sphingopyxis alaskensis (strain DSM 13593 / LMG 18877 / RB2256) (Sphingomonas alaskensis), this protein is Histidinol-phosphate aminotransferase.